A 205-amino-acid polypeptide reads, in one-letter code: Large ribosomal subunit protein bL21 (205 aa).

The disordered stretch occupies residues A107 to A137. Low complexity predominate over residues A122–A137.

It belongs to the bacterial ribosomal protein bL21 family. Part of the 50S ribosomal subunit. Contacts protein L20.

Its function is as follows. This protein binds to 23S rRNA in the presence of protein L20. The sequence is that of Large ribosomal subunit protein bL21 from Hyphomonas neptunium (strain ATCC 15444).